The chain runs to 577 residues: Arginine--tRNA ligase (577 aa).

The short motif at 122-132 (PNVAKEMHVGH) is the 'HIGH' region element.

It belongs to the class-I aminoacyl-tRNA synthetase family. Monomer.

It localises to the cytoplasm. It carries out the reaction tRNA(Arg) + L-arginine + ATP = L-arginyl-tRNA(Arg) + AMP + diphosphate. This chain is Arginine--tRNA ligase, found in Escherichia coli (strain K12 / MC4100 / BW2952).